A 166-amino-acid chain; its full sequence is HTH-type transcriptional regulator PrsX (166 aa).

Residues 25 to 159 (EHLLMQLCIR…FEVINKKLLA (135 aa)) form the HTH marR-type domain.

It is found in the cytoplasm. This Escherichia coli O6:H1 (strain CFT073 / ATCC 700928 / UPEC) protein is HTH-type transcriptional regulator PrsX (prsX).